The primary structure comprises 460 residues: Polygalacturonase (460 aa).

Positions 1-26 are cleaved as a signal peptide; the sequence is MALKTQLLWSFVVVFVVSFSTTSCSG. N-linked (GlcNAc...) asparagine glycosylation is present at Asn280. Catalysis depends on Asp292, which acts as the Proton donor. His315 is an active-site residue. Asn421 carries N-linked (GlcNAc...) asparagine glycosylation.

It belongs to the glycosyl hydrolase 28 family.

The protein localises to the secreted. It is found in the cell wall. It catalyses the reaction (1,4-alpha-D-galacturonosyl)n+m + H2O = (1,4-alpha-D-galacturonosyl)n + (1,4-alpha-D-galacturonosyl)m.. In terms of biological role, acts in concert with the pectinesterase, in the ripening process. Is involved in cell wall metabolism, specifically in polyuronide degradation. This chain is Polygalacturonase, found in Malus domestica (Apple).